A 339-amino-acid chain; its full sequence is Non-homologous end joining protein Ku (339 aa).

The Ku domain maps to 10-187 (ITFGLVNIPV…LPKATTGKPT (178 aa)). 2 disordered regions span residues 230-251 (DSGK…RQGA) and 263-339 (SLGQ…KHAA). The span at 267 to 277 (RGKEDKEDATP) shows a compositional bias: basic and acidic residues. A compositionally biased stretch (basic residues) spans 278–289 (ARRKAPARHAAA). A compositionally biased stretch (low complexity) spans 290–310 (RKQPAAKRAATPPAKRASTAA).

It belongs to the prokaryotic Ku family. As to quaternary structure, homodimer. Interacts with LigD.

In terms of biological role, with LigD forms a non-homologous end joining (NHEJ) DNA repair enzyme, which repairs dsDNA breaks with reduced fidelity. Binds linear dsDNA with 5'- and 3'- overhangs but not closed circular dsDNA nor ssDNA. Recruits and stimulates the ligase activity of LigD. The protein is Non-homologous end joining protein Ku of Cupriavidus necator (strain ATCC 17699 / DSM 428 / KCTC 22496 / NCIMB 10442 / H16 / Stanier 337) (Ralstonia eutropha).